Consider the following 236-residue polypeptide: Carbonyl reductase family member 4 (236 aa).

NADP(+) contacts are provided by residues 11-14 (SRGI), 34-35 (RN), Asp55, and 82-84 (SAG). Residue Ser134 participates in substrate binding. Residues Tyr147, Lys151, and 180-182 (IRT) contribute to the NADP(+) site. Tyr147 acts as the Proton acceptor in catalysis.

This sequence belongs to the short-chain dehydrogenases/reductases (SDR) family. In terms of assembly, homotetramer (in vitro). Heterotetramer with HSD17B8; contains two molecules each of HSD17B8 and CBR4.

The protein resides in the mitochondrion matrix. It participates in lipid metabolism; fatty acid biosynthesis. In terms of biological role, the heterotetramer with HSD17B8 has NADH-dependent 3-ketoacyl-acyl carrier protein reductase activity, and thereby plays a role in mitochondrial fatty acid biosynthesis. Within the heterotetramer, HSD17B8 binds NADH; CBR4 binds NADPD. The homotetramer has NADPH-dependent quinone reductase activity. Both homotetramer and the heterotetramer have broad in vitro substrate specificity and can reduce 9,10-phenanthrenequinone, 1,4-benzoquinone and various other o-quinones and p-quinones. This chain is Carbonyl reductase family member 4 (cbr4), found in Xenopus laevis (African clawed frog).